A 2363-amino-acid polypeptide reads, in one-letter code: Highly reducing polyketide synthase cnsI (2363 aa).

Residues 14-440 (PEPIAIIGMS…GSNAHAIVES (427 aa)) enclose the Ketosynthase family 3 (KS3) domain. Active-site for beta-ketoacyl synthase activity residues include cysteine 187, histidine 322, and histidine 363. Positions 546–854 (LAFVFTGQGA…FLQVLKSINA (309 aa)) are malonyl-CoA:ACP transacylase (MAT) domain. Serine 638 (for malonyltransferase activity) is an active-site residue. Positions 938–1068 (HDLLGSPMDF…GTFTLHYDAR (131 aa)) are N-terminal hotdog fold. Residues 938–1224 (HDLLGSPMDF…RLDSIASDVS (287 aa)) form a dehydratase (DH) domain region. The 309-residue stretch at 938–1246 (HDLLGSPMDF…LGPVPMSKVP (309 aa)) folds into the PKS/mFAS DH domain. Histidine 970 acts as the Proton acceptor; for dehydratase activity in catalysis. The C-terminal hotdog fold stretch occupies residues 1089–1246 (TAECETNRDA…LGPVPMSKVP (158 aa)). Aspartate 1159 (proton donor; for dehydratase activity) is an active-site residue. Positions 1669 to 1976 (GGQWVEDRQL…ARQTGISVAI (308 aa)) are enoylreductase (ER) domain. A catalytic ketoreductase (KRc) domain region spans residues 2001–2177 (TYLLAGGLGM…PGHSIDIGLV (177 aa)). A Carrier domain is found at 2279–2357 (EDASYVVNQA…VLSEKIAAQS (79 aa)). The residue at position 2317 (serine 2317) is an O-(pantetheine 4'-phosphoryl)serine.

It participates in alkaloid biosynthesis. Highly reducing polyketide synthase; part of the gene cluster that mediates the biosynthesis of communesins, a prominent class of indole alkaloids with great potential as pharmaceuticals. Communesins are biosynthesized by the coupling of tryptamine and aurantioclavine, two building blocks derived from L-tryptophan. The L-tryptophan decarboxylase cnsB converts L-tryptophan to tryptamine, whereas the tryptophan dimethylallyltransferase cnsF converts L-tryptophan to 4-dimethylallyl tryptophan which is further transformed to aurantioclavine by the aurantioclavine synthase cnsA, probably aided by the catalase cnsD. The cytochrome P450 monooxygenase cnsC catalyzes the heterodimeric coupling between the two different indole moieties, tryptamine and aurantioclavine, to construct vicinal quaternary stereocenters and yield the heptacyclic communesin scaffold. The O-methyltransferase cnsE then methylates the communesin scaffold to produce communesin K, the simplest characterized communesin that contains the heptacyclic core. The dioxygenase cnsJ converts communesin K into communesin I. Acylation to introduce the hexadienyl group at position N16 of communesin I by the acyltransferase cnsK leads to the production of communesin B. The hexadienyl group is produced by the highly reducing polyketide synthase cnsI, before being hydrolytically removed from cnsI by the serine hydrolase cnsH, converted into hexadienyl-CoA by the CoA ligase cnsG, and then transferred to communesin I by cnsK. Surprisingly, cnsK may also be a promiscuous acyltransferase that can tolerate a range of acyl groups, including acetyl-, propionyl-, and butyryl-CoA, which lead to communesins A, G and H respectively. The roles of the alpha-ketoglutarate-dependent dioxygenases cnsM and cnsP have still to be determined. This is Highly reducing polyketide synthase cnsI from Penicillium expansum (Blue mold rot fungus).